A 669-amino-acid chain; its full sequence is DNA ligase (669 aa).

NAD(+)-binding positions include 34–38 (DAEYD), 83–84 (SL), and glutamate 113. Lysine 115 functions as the N6-AMP-lysine intermediate in the catalytic mechanism. Residues arginine 136, glutamate 170, lysine 286, and lysine 310 each contribute to the NAD(+) site. Zn(2+) is bound by residues cysteine 404, cysteine 407, cysteine 422, and cysteine 427. Residues 591–669 (IADSPFAGKT…EEALVKAISH (79 aa)) enclose the BRCT domain.

It belongs to the NAD-dependent DNA ligase family. LigA subfamily. The cofactor is Mg(2+). It depends on Mn(2+) as a cofactor.

The enzyme catalyses NAD(+) + (deoxyribonucleotide)n-3'-hydroxyl + 5'-phospho-(deoxyribonucleotide)m = (deoxyribonucleotide)n+m + AMP + beta-nicotinamide D-nucleotide.. Functionally, DNA ligase that catalyzes the formation of phosphodiester linkages between 5'-phosphoryl and 3'-hydroxyl groups in double-stranded DNA using NAD as a coenzyme and as the energy source for the reaction. It is essential for DNA replication and repair of damaged DNA. The chain is DNA ligase from Halalkalibacterium halodurans (strain ATCC BAA-125 / DSM 18197 / FERM 7344 / JCM 9153 / C-125) (Bacillus halodurans).